We begin with the raw amino-acid sequence, 214 residues long: 3-isopropylmalate dehydratase small subunit (214 aa).

Belongs to the LeuD family. LeuD type 1 subfamily. In terms of assembly, heterodimer of LeuC and LeuD.

It carries out the reaction (2R,3S)-3-isopropylmalate = (2S)-2-isopropylmalate. The protein operates within amino-acid biosynthesis; L-leucine biosynthesis; L-leucine from 3-methyl-2-oxobutanoate: step 2/4. Functionally, catalyzes the isomerization between 2-isopropylmalate and 3-isopropylmalate, via the formation of 2-isopropylmaleate. In Nitrosococcus oceani (strain ATCC 19707 / BCRC 17464 / JCM 30415 / NCIMB 11848 / C-107), this protein is 3-isopropylmalate dehydratase small subunit.